The primary structure comprises 970 residues: Protein CLASP-3 (970 aa).

2 disordered regions span residues 314-377 and 651-675; these read SRLA…QKAR and NGIS…ETPH. Polar residues predominate over residues 344–355; sequence GSRTRTSSITSN. The stretch at 905–943 is one HEAT repeat; that stretch reads ITPCVIKAYQSTSSSVRKTVVYCLVAMVNRVGEQRMAPH.

It belongs to the CLASP family.

It localises to the cytoplasm. Its subcellular location is the cytoskeleton. Its function is as follows. Microtubule plus-end tracking protein that promotes the stabilization of dynamic microtubules. The chain is Protein CLASP-3 (cls-3) from Caenorhabditis briggsae.